Reading from the N-terminus, the 257-residue chain is Transcription factor GHD7 (257 aa).

Phosphoserine; by CK1 is present on Ser68. Residues 190–232 (REAKLMRYKEKRKKRCYEKQIRYASRKAYAEMRPRVRGRFAKE) form the CCT domain. The Nuclear localization signal motif lies at 198–204 (KEKRKKR). The tract at residues 226-245 (RGRFAKEPDQEAVAPPSTYV) is disordered.

Interacts with HD16/EL1. Phosphorylated at Ser-68 by HD16/EL1, a casein kinase 1. As to expression, expressed in the apical meristem, developing leaves, leaf sheaths of young seedling, root meristem, epidermal layer of developing stems and branch-primordia of developing panicles.

Its subcellular location is the nucleus. Its function is as follows. Probable transcription factor involved in the regulation of flowering time under long day (LD) conditions. Plays a major role as repressor of flowering. Controls flowering time by negatively regulating the expression of EHD1 and HD3A. The chain is Transcription factor GHD7 from Oryza sativa subsp. japonica (Rice).